The chain runs to 297 residues: uncharacterized protein (297 aa).

The helical transmembrane segment at 191–211 (VMIILSCSNITILAVLSIVGL) threads the bilayer. A compositionally biased stretch (polar residues) spans 275–287 (SKTSETQSVSGST). Positions 275 to 297 (SKTSETQSVSGSTHSDEKLTAPM) are disordered. Over residues 288–297 (HSDEKLTAPM) the composition is skewed to basic and acidic residues.

Its subcellular location is the host membrane. This is an uncharacterized protein from Cryphonectria parasitica mycoreovirus 1 (strain 9B21) (CpMYRV-1).